The primary structure comprises 590 residues: Multidrug resistance-like ATP-binding protein MdlA (590 aa).

Positions 18–303 constitute an ABC transmembrane type-1 domain; that stretch reads YLGAVALLVI…LAWMFNIVER (286 aa). 6 helical membrane passes run 23-43, 53-73, 134-154, 155-175, 248-268, and 280-300; these read ALLVIIAMLQLVPPKVVGIVV, TGQILMWIATMVLIAVVVYLL, GVLTLVDSLVMGCAVLIMMST, QISWQLTLFSLLPMPVMAIMI, IYIAIGMANLLAIGGGSWMVV, and FMMYLGLMIWPMLALAWMFNI. The ABC transporter domain maps to 337–570; it reads VNIHQFTYPQ…SGWYRDMYRY (234 aa). 369–376 contacts ATP; that stretch reads GPTGSGKS.

The protein belongs to the ABC transporter superfamily. Drug exporter-2 (TC 3.A.1.117) family.

It is found in the cell inner membrane. The enzyme catalyses ATP + H2O + xenobioticSide 1 = ADP + phosphate + xenobioticSide 2.. In Escherichia coli (strain K12), this protein is Multidrug resistance-like ATP-binding protein MdlA (mdlA).